Consider the following 104-residue polypeptide: uncharacterized protein (104 aa).

Residues 72-92 (LIFSHNIVIIVSPIYMISFII) traverse the membrane as a helical segment.

It is found in the membrane. This is an uncharacterized protein from Saccharomyces cerevisiae (strain ATCC 204508 / S288c) (Baker's yeast).